Reading from the N-terminus, the 893-residue chain is UPF0182 protein CLM_0018 (893 aa).

7 helical membrane passes run 9–29 (IPLF…NFII), 49–69 (AIII…WMYY), 94–114 (LFFI…SSSY), 154–174 (VIIS…FILE), 202–222 (LAIV…IKIW), 246–266 (FYKI…LSIV), and 273–293 (VSVC…ASFL).

Belongs to the UPF0182 family.

The protein resides in the cell membrane. The polypeptide is UPF0182 protein CLM_0018 (Clostridium botulinum (strain Kyoto / Type A2)).